Consider the following 800-residue polypeptide: DNA topoisomerase 4 subunit A (800 aa).

Residues 31–495 (LPDVRDGLKP…EIEEIKIDKE (465 aa)) form the Topo IIA-type catalytic domain. Catalysis depends on Tyr-119, which acts as the O-(5'-phospho-DNA)-tyrosine intermediate.

This sequence belongs to the type II topoisomerase GyrA/ParC subunit family. ParC type 2 subfamily. In terms of assembly, heterotetramer composed of ParC and ParE.

It is found in the cell membrane. It catalyses the reaction ATP-dependent breakage, passage and rejoining of double-stranded DNA.. Topoisomerase IV is essential for chromosome segregation. It relaxes supercoiled DNA. Performs the decatenation events required during the replication of a circular DNA molecule. In Staphylococcus aureus, this protein is DNA topoisomerase 4 subunit A.